Consider the following 968-residue polypeptide: AP2-associated protein kinase 1 (968 aa).

Methionine 1 is subject to N-acetylmethionine. Over residues 1–11 (MKKFFDSRREQ) the composition is skewed to basic and acidic residues. Residues 1–25 (MKKFFDSRREQGGSGLGSGSSGGGG) form a disordered region. Gly residues predominate over residues 12-25 (GGSGLGSGSSGGGG). Serine 14 is subject to Phosphoserine. Residues 46–315 (VTVDEVLAEG…QVSFFSFKLL (270 aa)) enclose the Protein kinase domain. ATP contacts are provided by residues 52–60 (LAEGGFAIV) and lysine 74. Aspartate 176 serves as the catalytic Proton acceptor. Tyrosine 234 carries the post-translational modification Phosphotyrosine. Serine 235 carries the phosphoserine modification. Disordered stretches follow at residues 327-485 (SPIP…AQAP) and 578-640 (IQPP…AGHR). Threonine 354 and threonine 389 each carry phosphothreonine. Arginine 391 is modified (omega-N-methylarginine). Positions 437-448 (QAPPAPQQPPSA) are enriched in pro residues. 2 stretches are compositionally biased toward low complexity: residues 449-472 (PAQGLPAQAQATPQHQQQLFLKQQ) and 578-589 (IQPPQAQPATAS). Threonine 613 carries the post-translational modification Phosphothreonine. Serine 625 bears the Phosphoserine mark. Phosphothreonine is present on threonine 627. Serine 630, serine 631, serine 644, and serine 657 each carry phosphoserine. Threonine 660 bears the Phosphothreonine mark. A disordered region spans residues 671–708 (SLNKSKSATTTPSGSPRASQQNVYNPSEGSTWNPFDDD). The span at 679–703 (TTTPSGSPRASQQNVYNPSEGSTWN) shows a compositional bias: polar residues. Tyrosine 694 carries the phosphotyrosine modification. Phosphoserine occurs at positions 738, 853, 944, and 945. Residues 830 to 967 (EKADVAVESL…SLLLVDQLID (138 aa)) are clathrin-binding domain (CBD). Disordered stretches follow at residues 843–862 (LEPPVPQRLPSQTESVASNR) and 929–952 (PVLITKNPQGGHSRNSSGSSESSL). The span at 851 to 862 (LPSQTESVASNR) shows a compositional bias: polar residues. Over residues 938-951 (GGHSRNSSGSSESS) the composition is skewed to low complexity.

This sequence belongs to the protein kinase superfamily. Ser/Thr protein kinase family. Interacts (via CBD domain) with clathrin. Interacts with AP-2 complex. Interacts with NUMB. Interacts with alpha-adaptin. Interacts with EPS15. Interacts with membrane-bound activated NOTCH1 but not with the inactive full-length form of NOTCH1. Preferentially interacts with monoubiquitinated activated NOTCH1 compared to the non-ubiquitinated form. Autophosphorylated.

The protein localises to the cell membrane. The protein resides in the membrane. Its subcellular location is the clathrin-coated pit. It localises to the presynapse. It catalyses the reaction L-seryl-[protein] + ATP = O-phospho-L-seryl-[protein] + ADP + H(+). The catalysed reaction is L-threonyl-[protein] + ATP = O-phospho-L-threonyl-[protein] + ADP + H(+). Its activity is regulated as follows. Stimulated by clathrin. Its function is as follows. Regulates clathrin-mediated endocytosis by phosphorylating the AP2M1/mu2 subunit of the adaptor protein complex 2 (AP-2) which ensures high affinity binding of AP-2 to cargo membrane proteins during the initial stages of endocytosis. Preferentially, may phosphorylate substrates on threonine residues. Regulates phosphorylation of other AP-2 subunits as well as AP-2 localization and AP-2-mediated internalization of ligand complexes. Phosphorylates NUMB and regulates its cellular localization, promoting NUMB localization to endosomes. Binds to and stabilizes the activated form of NOTCH1, increases its localization in endosomes and regulates its transcriptional activity. This is AP2-associated protein kinase 1 (AAK1) from Sus scrofa (Pig).